The chain runs to 398 residues: 1-deoxy-D-xylulose 5-phosphate reductoisomerase (398 aa).

Positions 10, 11, 12, 13, 36, 37, 38, and 124 each coordinate NADPH. Lysine 125 lines the 1-deoxy-D-xylulose 5-phosphate pocket. Position 126 (glutamate 126) interacts with NADPH. Aspartate 150 lines the Mn(2+) pocket. 1-deoxy-D-xylulose 5-phosphate is bound by residues serine 151, glutamate 152, serine 186, and histidine 209. Residue glutamate 152 coordinates Mn(2+). NADPH is bound at residue glycine 215. Serine 222, asparagine 227, lysine 228, and glutamate 231 together coordinate 1-deoxy-D-xylulose 5-phosphate. Glutamate 231 contributes to the Mn(2+) binding site.

It belongs to the DXR family. In terms of assembly, homodimer. Mg(2+) serves as cofactor. Mn(2+) is required as a cofactor.

The enzyme catalyses 2-C-methyl-D-erythritol 4-phosphate + NADP(+) = 1-deoxy-D-xylulose 5-phosphate + NADPH + H(+). It participates in isoprenoid biosynthesis; isopentenyl diphosphate biosynthesis via DXP pathway; isopentenyl diphosphate from 1-deoxy-D-xylulose 5-phosphate: step 1/6. Its function is as follows. Catalyzes the NADPH-dependent rearrangement and reduction of 1-deoxy-D-xylulose-5-phosphate (DXP) to 2-C-methyl-D-erythritol 4-phosphate (MEP). The sequence is that of 1-deoxy-D-xylulose 5-phosphate reductoisomerase from Serratia proteamaculans (strain 568).